The following is a 789-amino-acid chain: Cell pattern formation-associated protein stuA (789 aa).

2 disordered regions span residues 50–131 (PALS…NTVG) and 205–224 (PGGV…SVSS). Polar residues-rich tracts occupy residues 55 to 69 (PTAS…SYRT), 76 to 88 (ASHN…SLSG), and 115 to 131 (LDSS…NTVG). The region spanning 272–378 (RVTATLWEDE…HNIGGLLYHP (107 aa)) is the HTH APSES-type domain. The segment at residues 306–327 (GTKLLNVAGMTRGRRDGILKSE) is a DNA-binding region (H-T-H motif). Disordered stretches follow at residues 389-459 (QESQ…ASSL), 487-543 (SIDT…YAPQ), and 616-789 (HDSA…ARRR). Polar residues-rich tracts occupy residues 419-438 (LQTP…SQSA), 487-529 (SIDT…SKSY), 620-636 (GYNT…NPSV), 645-667 (QLAS…TPRT), and 676-713 (SGYN…SVAS). A nuclear localization domain region spans residues 731–758 (KRMREDDDVDQIVRPDSRGAEYESKRRK). The segment covering 741 to 754 (QIVRPDSRGAEYES) has biased composition (basic and acidic residues).

Belongs to the EFG1/PHD1/stuA family.

The protein resides in the nucleus. Transcription factor that regulates asexual reproduction. Binds the StuA-response elements (StRE) with the consensus sequence 5'-(A/T)CGCG(T/A)N(A/C)-3' at the promoters of target genes. This is Cell pattern formation-associated protein stuA from Aspergillus flavus (strain ATCC 200026 / FGSC A1120 / IAM 13836 / NRRL 3357 / JCM 12722 / SRRC 167).